Consider the following 64-residue polypeptide: Large ribosomal subunit protein bL35 (64 aa).

Basic residues predominate over residues 1–14 (MKQKTHKGTAKRIK). A disordered region spans residues 1–48 (MKQKTHKGTAKRIKVTGSGKLRREQANRRHLLEGKPSKRTRRLKGTED). Basic and acidic residues predominate over residues 21–36 (LRREQANRRHLLEGKP).

The protein belongs to the bacterial ribosomal protein bL35 family.

In Corynebacterium aurimucosum (strain ATCC 700975 / DSM 44827 / CIP 107346 / CN-1) (Corynebacterium nigricans), this protein is Large ribosomal subunit protein bL35.